We begin with the raw amino-acid sequence, 66 residues long: Phylloseptin-S1 (66 aa).

A signal peptide spans 1 to 22 (MAFLKKSLFLVLFLGLVSLSIC). Residues 23-46 (EEEKRETEEEEHDQEEDDKSEEKR) constitute a propeptide that is removed on maturation. Positions 25–44 (EKRETEEEEHDQEEDDKSEE) are disordered. A compositionally biased stretch (acidic residues) spans 30–41 (EEEEHDQEEDDK). Phe65 is subject to Phenylalanine amide.

Expressed by the skin glands.

The protein resides in the secreted. It localises to the target cell membrane. In terms of biological role, antimicrobial peptide with high activity against Gram-positive bacteria, low activity against Gram-negative bacteria, and moderate activity against fungi. Acts on bacterial biofilms (S.aureus) with the same potency than on bacteria. Acts by causing bacterial membrane disruption inducing leakage of the intracellular content followed by cell death. It adopts an alpha-helical amphipathic structure in membrane environments. Also shows highly potent antiparasitic activity against Leishmania species. Shows low hemolytic activity on horse and human erythrocytes (LC(50)=39 uM). Is also active on human monocytes (IC(50)=23 uM). This Phyllomedusa sauvagei (Sauvage's leaf frog) protein is Phylloseptin-S1.